A 151-amino-acid polypeptide reads, in one-letter code: Protein Turandot Z (151 aa).

The signal sequence occupies residues 1 to 23 (MSRLIHLSFVLALLACLTGTISA).

It belongs to the Turandot family.

Its subcellular location is the secreted. Its function is as follows. A humoral factor that may play a role in stress tolerance. The protein is Protein Turandot Z of Drosophila persimilis (Fruit fly).